The chain runs to 374 residues: Diels-Alderase fsa2 (374 aa).

The beta-sandwich motif stretch occupies residues 1–216; that stretch reads MSNVTVSAFT…MDRVWSPLSW (216 aa). A beta-barrel motif region spans residues 216 to 374; that stretch reads WPQVMTESYY…VGTGGQCELS (159 aa).

Belongs to the Diels-Alderase family.

The enzyme catalyses (5S)-3-[(2E,6R,8E,10E,12E)-2,6-dimethyltetradeca-2,8,10,12-tetraenoyl]-5-(hydroxymethyl)pyrrolidine-2,4-dione = trichosetin. The protein operates within mycotoxin biosynthesis. Functionally, diels-Alderase; part of the gene cluster that mediates the biosynthesis of the HIV-1 integrase inhibitor equisetin and of fusarisetin A, both trans-fused decalin-containing tetramic acids showing also antimicrobial activity. The PKS module of fsa1 together with the enoylreductase fsa3 catalyze the formation of the polyketide unit which is then conjugated to L-serine by the condensation domain of the fsa1 NRPS module. Activity of the Dieckmann cyclase domain (RED) results in release of the Dieckmann product intermediate. Diels-Alderase fsa2 is involved in endo-selective Diels-Alder cycloaddition to form the decalin ring, leading to the production of N-desmethylequisetin also called trichosetin. Subsequent N-methylation is carried out by fsa4 to give equisetin. The enzymatic gene responsible for the conversion of equisetin to fusarisetin A has not been identified yet and is probably located outside of the fsa cluster. The protein is Diels-Alderase fsa2 of Fusarium sp. (strain FN080326).